Consider the following 801-residue polypeptide: Quinoprotein glucose dehydrogenase A (801 aa).

Positions 1 to 33 are cleaved as a signal peptide; it reads MNQPTSRSGLTTFTVIIIGLLALFLLIGGIWLA. The next 4 helical transmembrane spans lie at 39–55, 59–79, 94–108, and 119–138; these read IYYI…AWQL, ASTA…WSVW, ILGI…PAVT, and VALS…SIFN. The active-site Proton acceptor is D471.

This sequence belongs to the bacterial PQQ dehydrogenase family. Monomer. Pyrroloquinoline quinone is required as a cofactor.

The protein resides in the cell inner membrane. It catalyses the reaction D-glucose + A = D-glucono-1,5-lactone + AH2. Its function is as follows. Catalyzes an exceptionally high rate of oxidation of a wide range of aldose sugars, including D-glucose, galactose, arabinose and xylose, and also the disaccharides lactose, cellobiose and maltose. The sequence is that of Quinoprotein glucose dehydrogenase A (gdhA) from Acinetobacter calcoaceticus.